The primary structure comprises 3088 residues: Protein prune homolog 2 (3088 aa).

M1 bears the N-acetylmethionine mark. A DHH motif motif is present at residues G109 to S111. Disordered regions lie at residues I433–S468, H490–S628, S673–N759, S771–A795, S846–R909, S952–D1080, S1192–S1211, S1231–S1371, R1413–F1452, L1472–F1491, V1515–E1585, D1632–I1698, L1741–T1768, V1782–D1813, I2089–K2114, Y2173–A2215, Q2240–Q2260, S2492–D2542, T2589–G2667, A2687–D2710, Q2814–I2833, and P2841–E2875. Over residues S503–S512 the composition is skewed to low complexity. Over residues S562–E582 the composition is skewed to basic and acidic residues. 2 stretches are compositionally biased toward polar residues: residues M613–E625 and S673–E684. Residues S685–S699 are compositionally biased toward basic and acidic residues. The span at L750–N759 shows a compositional bias: polar residues. Residues S846–N857 are compositionally biased toward polar residues. A compositionally biased stretch (basic and acidic residues) spans W865–I876. Residues N881–K894 are compositionally biased toward polar residues. Residues P895–R909 show a composition bias toward basic and acidic residues. The span at D964–T977 shows a compositional bias: low complexity. The span at G980–D1000 shows a compositional bias: basic and acidic residues. Polar residues-rich tracts occupy residues G1001–P1027 and H1037–H1048. Composition is skewed to basic and acidic residues over residues N1049 to G1062, S1192 to N1208, H1282 to L1293, D1314 to L1339, and Q1425 to L1434. Polar residues predominate over residues S1436–M1450. Residues S1537–E1585 are compositionally biased toward polar residues. The span at S1687–I1698 shows a compositional bias: acidic residues. The span at K1752–T1768 shows a compositional bias: polar residues. Composition is skewed to basic and acidic residues over residues E2516–D2542 and N2604–S2622. The span at S2623–S2632 shows a compositional bias: polar residues. Positions D2823–I2833 are enriched in acidic residues. The CRAL-TRIO domain occupies D2895 to R3056.

The protein belongs to the PPase class C family. Prune subfamily. A high level of expression seen in the nervous system (brain, cerebellum and spinal cord) as well as adrenal gland. Expressed at high levels in noneuroblastoma, rhabdomyosarcoma, melanoma and some osteosarcoma cell lines, whereas at only low levels in cancer cell lines of liver, breast, thyroid and colon. Expression is significantly higher in favorable tumors than aggressive ones.

It is found in the cytoplasm. In terms of biological role, may play an important role in regulating differentiation, survival and aggressiveness of the tumor cells. This Homo sapiens (Human) protein is Protein prune homolog 2 (PRUNE2).